The sequence spans 83 residues: Small ribosomal subunit protein bS16 (83 aa).

It belongs to the bacterial ribosomal protein bS16 family.

The sequence is that of Small ribosomal subunit protein bS16 from Shewanella amazonensis (strain ATCC BAA-1098 / SB2B).